The chain runs to 1073 residues: ATP-dependent helicase/deoxyribonuclease subunit B (1073 aa).

This sequence belongs to the helicase family. AddB/RexB type 2 subfamily. As to quaternary structure, heterodimer of AddA and RexB. The cofactor is Mg(2+).

Its function is as follows. The heterodimer acts as both an ATP-dependent DNA helicase and an ATP-dependent, dual-direction single-stranded exonuclease. Recognizes the chi site generating a DNA molecule suitable for the initiation of homologous recombination. This subunit has 5' -&gt; 3' nuclease activity but not helicase activity. This Streptococcus equi subsp. zooepidemicus (strain H70) protein is ATP-dependent helicase/deoxyribonuclease subunit B.